A 314-amino-acid chain; its full sequence is Dihydropteroate synthase (314 aa).

One can recognise a Pterin-binding domain in the interval 10 to 294; it reads TVICGIINVT…DVASHRMAVE (285 aa). N17 is a binding site for Mg(2+). Residues D91, N110, D201, K237, and 282–284 each bind (7,8-dihydropterin-6-yl)methyl diphosphate; that span reads RVH.

This sequence belongs to the DHPS family. Homodimer. It depends on Mg(2+) as a cofactor.

The catalysed reaction is (7,8-dihydropterin-6-yl)methyl diphosphate + 4-aminobenzoate = 7,8-dihydropteroate + diphosphate. It functions in the pathway cofactor biosynthesis; tetrahydrofolate biosynthesis; 7,8-dihydrofolate from 2-amino-4-hydroxy-6-hydroxymethyl-7,8-dihydropteridine diphosphate and 4-aminobenzoate: step 1/2. Its activity is regulated as follows. Is potently inhibited by sulfonamides, with Ki values between 25 nM and 850 nM. Its function is as follows. Catalyzes the condensation of para-aminobenzoate (pABA) with 6-hydroxymethyl-7,8-dihydropterin diphosphate (DHPt-PP) to form 7,8-dihydropteroate, the immediate precursor of folate derivatives. Is the target for the sulfonamide group of antimicrobial drugs. Sulfonamide drugs act as pABA analogs, they inhibit the reaction by acting as alternative substrates, leading to a 'dead end' sulfa-pterin product. This Streptococcus pneumoniae (strain ATCC BAA-255 / R6) protein is Dihydropteroate synthase (sulA).